A 375-amino-acid chain; its full sequence is Glutamate 5-kinase (375 aa).

Lysine 3 is a binding site for ATP. Residues serine 44, aspartate 131, and asparagine 143 each coordinate substrate. Residues 163–164 (SD) and 205–211 (TGGMVTK) each bind ATP. In terms of domain architecture, PUA spans 269–346 (EGTLWVDDGA…GDIEALLGYR (78 aa)).

It belongs to the glutamate 5-kinase family.

It localises to the cytoplasm. The enzyme catalyses L-glutamate + ATP = L-glutamyl 5-phosphate + ADP. The protein operates within amino-acid biosynthesis; L-proline biosynthesis; L-glutamate 5-semialdehyde from L-glutamate: step 1/2. Catalyzes the transfer of a phosphate group to glutamate to form L-glutamate 5-phosphate. The sequence is that of Glutamate 5-kinase from Rhodospirillum rubrum (strain ATCC 11170 / ATH 1.1.1 / DSM 467 / LMG 4362 / NCIMB 8255 / S1).